We begin with the raw amino-acid sequence, 145 residues long: D-aminoacyl-tRNA deacylase (145 aa).

Positions 137–138 match the Gly-cisPro motif, important for rejection of L-amino acids motif; that stretch reads GP.

It belongs to the DTD family. In terms of assembly, homodimer.

It localises to the cytoplasm. The catalysed reaction is glycyl-tRNA(Ala) + H2O = tRNA(Ala) + glycine + H(+). It carries out the reaction a D-aminoacyl-tRNA + H2O = a tRNA + a D-alpha-amino acid + H(+). Its function is as follows. An aminoacyl-tRNA editing enzyme that deacylates mischarged D-aminoacyl-tRNAs. Also deacylates mischarged glycyl-tRNA(Ala), protecting cells against glycine mischarging by AlaRS. Acts via tRNA-based rather than protein-based catalysis; rejects L-amino acids rather than detecting D-amino acids in the active site. By recycling D-aminoacyl-tRNA to D-amino acids and free tRNA molecules, this enzyme counteracts the toxicity associated with the formation of D-aminoacyl-tRNA entities in vivo and helps enforce protein L-homochirality. This is D-aminoacyl-tRNA deacylase from Escherichia coli O81 (strain ED1a).